Reading from the N-terminus, the 383-residue chain is Heme A synthase (383 aa).

A run of 8 helical transmembrane segments spans residues 38 to 58 (VRVWLMMLFGLVVIMIAVGGL), 127 to 147 (VIGLVWALGFFGFLVTRKIPP), 153 to 173 (LFLLGVLGGLQGAIGWWMVAS), 187 to 207 (LATHLGLAFFILGLIAWYIMV), 230 to 250 (ANWLMGLAAVQILLGALVAGI), 287 to 307 (LVQFNHRMVGYLLLLVGLYVW), 321 to 341 (AFDWVAVILFGQMVLGIVTVL), and 344 to 364 (APWTWAIAHQFGAVVTICLIL). Position 292 (H292) interacts with heme. H352 provides a ligand contact to heme.

This sequence belongs to the COX15/CtaA family. Type 2 subfamily. In terms of assembly, interacts with CtaB. Heme b serves as cofactor.

The protein localises to the cell membrane. It catalyses the reaction Fe(II)-heme o + 2 A + H2O = Fe(II)-heme a + 2 AH2. It participates in porphyrin-containing compound metabolism; heme A biosynthesis; heme A from heme O: step 1/1. Its function is as follows. Catalyzes the conversion of heme O to heme A by two successive hydroxylations of the methyl group at C8. The first hydroxylation forms heme I, the second hydroxylation results in an unstable dihydroxymethyl group, which spontaneously dehydrates, resulting in the formyl group of heme A. The chain is Heme A synthase from Dinoroseobacter shibae (strain DSM 16493 / NCIMB 14021 / DFL 12).